Reading from the N-terminus, the 369-residue chain is Histidinol-phosphate aminotransferase 2 (369 aa).

An N6-(pyridoxal phosphate)lysine modification is found at Lys-231.

This sequence belongs to the class-II pyridoxal-phosphate-dependent aminotransferase family. Histidinol-phosphate aminotransferase subfamily. In terms of assembly, homodimer. Pyridoxal 5'-phosphate is required as a cofactor.

It carries out the reaction L-histidinol phosphate + 2-oxoglutarate = 3-(imidazol-4-yl)-2-oxopropyl phosphate + L-glutamate. Its pathway is amino-acid biosynthesis; L-histidine biosynthesis; L-histidine from 5-phospho-alpha-D-ribose 1-diphosphate: step 7/9. This Legionella pneumophila (strain Paris) protein is Histidinol-phosphate aminotransferase 2.